A 297-amino-acid chain; its full sequence is N-acetylneuraminate lyase (297 aa).

Residues Ser-47 and Thr-48 each coordinate aceneuramate. The active-site Proton donor is the Tyr-137. The active-site Schiff-base intermediate with substrate is Lys-165. Positions 167, 189, 191, 192, and 208 each coordinate aceneuramate.

This sequence belongs to the DapA family. NanA subfamily. As to quaternary structure, homotetramer.

The protein resides in the cytoplasm. It carries out the reaction aceneuramate = aldehydo-N-acetyl-D-mannosamine + pyruvate. The protein operates within amino-sugar metabolism; N-acetylneuraminate degradation; D-fructose 6-phosphate from N-acetylneuraminate: step 1/5. Functionally, catalyzes the reversible aldol cleavage of N-acetylneuraminic acid (sialic acid; Neu5Ac) to form pyruvate and N-acetylmannosamine (ManNAc) via a Schiff base intermediate. This is N-acetylneuraminate lyase from Escherichia coli O139:H28 (strain E24377A / ETEC).